The following is a 473-amino-acid chain: MSSKSYSAGVKDYRDTYWEPDYQVKDSDFLACFKVVPQAGVPREEAAAAVAAESSTGTWTTVWTDLLTDLDYYKGRAYKIEDVPGDDEAFYAFIAYPIDLFEESSVVNVFTSLVGNVFGFKAVRSLRLEDVRIPLAYVMTCNGPPHGIQVERDKMDKYGRGLLGCTIKPKLGLSAKNYGRAVYECLRGGLDFTKDDENVNSQPFMRWRDRFLFVQEATEKAQQETGERKGHYLNVTAPSPEEMYERAEFAKEIGAPIIMHDFLTGGFCANTGLARWCRKNGMLLHIHRAMHAVMDRNPRHGIHFRVLAKALRLSGGDHLHTGTVVGKLEGDRAATEGWIDLLRERFIPEDRARGIFFDQDWGAMPGVFAVASGGIHVWHMPALVSIFGDDAVFQFGGGTLGHPWGNAAGAAANRVALEACVKARNEGRNLEREGKEILQAAAQHSPELKIAMETWKEIKFEFETVDKLDTTHR.

The substrate site is built by Asn-116 and Thr-166. Catalysis depends on Lys-168, which acts as the Proton acceptor. Lys-170 contributes to the substrate binding site. The Mg(2+) site is built by Lys-194, Asp-196, and Glu-197. Lys-194 is subject to N6-carboxylysine. The active-site Proton acceptor is the His-287. Arg-288, His-320, and Ser-372 together coordinate substrate.

It belongs to the RuBisCO large chain family. Type I subfamily. Heterohexadecamer of 8 large chains and 8 small chains. Mg(2+) serves as cofactor.

It carries out the reaction 2 (2R)-3-phosphoglycerate + 2 H(+) = D-ribulose 1,5-bisphosphate + CO2 + H2O. The enzyme catalyses D-ribulose 1,5-bisphosphate + O2 = 2-phosphoglycolate + (2R)-3-phosphoglycerate + 2 H(+). RuBisCO catalyzes two reactions: the carboxylation of D-ribulose 1,5-bisphosphate, the primary event in carbon dioxide fixation, as well as the oxidative fragmentation of the pentose substrate. Both reactions occur simultaneously and in competition at the same active site. The protein is Ribulose bisphosphate carboxylase large chain of Alkalilimnicola ehrlichii (strain ATCC BAA-1101 / DSM 17681 / MLHE-1).